The chain runs to 282 residues: Transcription factor MYB20 (282 aa).

HTH myb-type domains follow at residues 9–61 (KVGL…TNYL) and 62–116 (RPDL…KKKL). 2 consecutive DNA-binding regions (H-T-H motif) follow at residues 37 to 61 (WRAV…TNYL) and 89 to 112 (WSKI…NTHI).

As to expression, expressed in chalaza of mature seeds, cotyledons, rosette leaves, cauline leaves, veins of stems, mature siliques, sepals and styles. Expressed at low levels in roots.

The protein localises to the nucleus. Transcription factor that acts as a positive regulator of abscisic acid (ABA) signaling in response to salt stress. Acts as a negative regulator ABI1, ABI2 and PP2CA, which are protein phosphatases 2C acting as negative regulator of ABA signaling. Binds to the DNA specific sequence and core element 5'-ACGT-3' found in the promoters of ABI1 and PP2CA to negatively regulate their expression during ABA-dependent salt stress response. The chain is Transcription factor MYB20 from Arabidopsis thaliana (Mouse-ear cress).